The sequence spans 281 residues: Pantothenate synthetase (281 aa).

31–38 (MGNLHAGH) is a binding site for ATP. H38 serves as the catalytic Proton donor. Q62 provides a ligand contact to (R)-pantoate. Q62 is a beta-alanine binding site. Residue 150-153 (GKKD) coordinates ATP. Q156 contributes to the (R)-pantoate binding site. Residues V179 and 187–190 (MSSR) contribute to the ATP site.

It belongs to the pantothenate synthetase family. As to quaternary structure, homodimer.

It localises to the cytoplasm. It catalyses the reaction (R)-pantoate + beta-alanine + ATP = (R)-pantothenate + AMP + diphosphate + H(+). It functions in the pathway cofactor biosynthesis; (R)-pantothenate biosynthesis; (R)-pantothenate from (R)-pantoate and beta-alanine: step 1/1. Its function is as follows. Catalyzes the condensation of pantoate with beta-alanine in an ATP-dependent reaction via a pantoyl-adenylate intermediate. The protein is Pantothenate synthetase of Xylella fastidiosa (strain M12).